Consider the following 375-residue polypeptide: MRVAIVAESFLPNVNGVTNSVLRVIDHLRRTGHEVLVIAPDTPRGQPPADRIHDGVRVHRVPSRMFPKITSLPLGVPRPRMIGVLRGFDPDVVHLASPALLGYGGLHAARHLGVPSVAVFQTDVAGFAESYGMGVASRAAWAWTRHLHSRADRTLAPSTSAMENLAAHRIPRVHRWGRGVDITGFVPSARDEHLRRTWSPDGRPIVGFVGRLAPEKHVERLAVLAARDDLQLVIVGDGVDRVKLQTVLPTAVFTGELRGAALAAAYASMDVFVHPGEHETFCQTVQEAMASGVPVIAPDAGGPRDLVAPCRTGLLLDVDGFECALPAAVTHLIAERRRYGIAARRSVLARTWPVVCDELIGHYEAVLGRRSLRAA.

This sequence belongs to the glycosyltransferase group 1 family. Glycosyltransferase 4 subfamily.

Its pathway is phospholipid metabolism; phosphatidylinositol metabolism. Functionally, catalyzes the addition of a mannose residue from GDP-D-mannose to GlcAGroAc2 to generate 1,2-di-O-C16/C18:1-(alpha-D-mannopyranosyl)-(1-4)-(alpha-D-glucopyranosyluronic acid)-(1-3)-glycerol(ManGlcAGroAc2). The protein is GDP-mannose-dependent alpha-mannosyltransferase (mgtA) of Mycolicibacterium smegmatis (strain ATCC 700084 / mc(2)155) (Mycobacterium smegmatis).